Consider the following 556-residue polypeptide: Optineurin (556 aa).

The interval 1 to 33 (MSSKPQIRPAENGEHCRSKMENGMDSMAPPTLS) is disordered. Residues 11 to 22 (ENGEHCRSKMEN) show a composition bias toward basic and acidic residues. Residues 38-164 (EEMVQQMKEL…SELQVKLNIA (127 aa)) are a coiled coil. The LIR motif lies at 168-173 (DSFVEI). A coiled-coil region spans residues 219 to 487 (VSQLLCCLRN…LLKEQQNLED (269 aa)). Positions 245 to 274 (ERLSKMENETSNCLESGTQTNQEEESSEAI) are disordered. Positions 253 to 265 (ETSNCLESGTQTN) are enriched in polar residues. The UBAN motif lies at 453-458 (DFHAER). Residues 496 to 524 (MQNRHGARAPDREHSPRLVQRGTGSQEWP) form a disordered region. The segment at 526–556 (QRNISIYSCPKCEEILPDLDTLQIHVMDCIN) adopts a CCHC NOA-type zinc-finger fold. Zn(2+)-binding residues include C534, C537, H550, and C554.

Binds to linear ubiquitin chains. Interacts with LC3 family members. Expressed in erythrocytes, skeletal muscle, heart, spleen and brain. Weakly expressed in lung and liver (at protein level).

It localises to the cytoplasm. Its subcellular location is the perinuclear region. It is found in the golgi apparatus. The protein localises to the trans-Golgi network. The protein resides in the cytoplasmic vesicle. It localises to the recycling endosome. Its subcellular location is the autophagosome. Probably part of the TNF-alpha signaling pathway that can shift the equilibrium toward induction of cell death. May act by regulating membrane trafficking and cellular morphogenesis. May act as autophagy receptor that interacts directly with both the cargo to become degraded and an autophagy modifier of the MAP1 LC3 family. This is Optineurin (OPTN) from Gallus gallus (Chicken).